Consider the following 62-residue polypeptide: Large ribosomal subunit protein bL28 (62 aa).

Belongs to the bacterial ribosomal protein bL28 family.

In Helicobacter pylori (strain HPAG1), this protein is Large ribosomal subunit protein bL28.